Reading from the N-terminus, the 629-residue chain is Polyadenylate-binding protein, cytoplasmic and nuclear (629 aa).

The disordered stretch occupies residues 1–47 (MTLENKAEASPATKEETTTEAAPAEGEAKTESSEEKGSKEDQGDNAS). A compositionally biased stretch (basic and acidic residues) spans 26 to 42 (GEAKTESSEEKGSKEDQ). RRM domains lie at 46-124 (ASLY…WSQR), 134-211 (GNIY…PHVP), 227-304 (TNVF…RAKK), and 330-407 (VNLY…LAQR). The tract at residues 465-543 (GANPQMMMRP…RRKDGESRVA (79 aa)) is disordered. 2 stretches are compositionally biased toward low complexity: residues 493–506 (MYGAPPQGYQQGGF) and 514–531 (GGQPPRSGQPGPQGQFRG). One can recognise a PABC domain in the interval 542–624 (VADSISNALE…AITAYNEYLN (83 aa)).

The protein belongs to the polyadenylate-binding protein type-1 family.

It is found in the cytoplasm. The protein resides in the nucleus. Functionally, binds the poly(A) tail of mRNA. Appears to be an important mediator of the multiple roles of the poly(A) tail in mRNA biogenesis, stability and translation. In the nucleus, involved in both mRNA cleavage and polyadenylation. Is also required for efficient mRNA export to the cytoplasm. Acts in concert with a poly(A)-specific nuclease (PAN) to affect poly(A) tail shortening, which may occur concomitantly with either nucleocytoplasmic mRNA transport or translational initiation. In the cytoplasm, stimulates translation initiation and regulates mRNA decay through translation termination-coupled poly(A) shortening, probably mediated by PAN. This chain is Polyadenylate-binding protein, cytoplasmic and nuclear (PAB1), found in Yarrowia lipolytica (strain CLIB 122 / E 150) (Yeast).